A 142-amino-acid polypeptide reads, in one-letter code: Aspartate 1-decarboxylase (142 aa).

Serine 25 serves as the catalytic Schiff-base intermediate with substrate; via pyruvic acid. Serine 25 is subject to Pyruvic acid (Ser). Residue threonine 57 participates in substrate binding. The active-site Proton donor is the tyrosine 58. 73-75 (GAA) is a substrate binding site.

It belongs to the PanD family. As to quaternary structure, heterooctamer of four alpha and four beta subunits. The cofactor is pyruvate. In terms of processing, is synthesized initially as an inactive proenzyme, which is activated by self-cleavage at a specific serine bond to produce a beta-subunit with a hydroxyl group at its C-terminus and an alpha-subunit with a pyruvoyl group at its N-terminus.

It is found in the cytoplasm. The catalysed reaction is L-aspartate + H(+) = beta-alanine + CO2. Its pathway is cofactor biosynthesis; (R)-pantothenate biosynthesis; beta-alanine from L-aspartate: step 1/1. Catalyzes the pyruvoyl-dependent decarboxylation of aspartate to produce beta-alanine. The chain is Aspartate 1-decarboxylase from Mycobacterium leprae (strain Br4923).